Reading from the N-terminus, the 242-residue chain is RNA transcription, translation and transport factor protein (242 aa).

The protein belongs to the RTRAF family. As to quaternary structure, homodimer. Component of a tRNA-splicing ligase complex.

The protein resides in the nucleus. Its subcellular location is the cytoplasm. It is found in the cytosol. The protein localises to the perinuclear region. It localises to the cytoskeleton. The protein resides in the microtubule organizing center. Its subcellular location is the centrosome. In terms of biological role, RNA-binding protein involved in modulation of mRNA transcription by Polymerase II. Component of the tRNA-splicing ligase complex. This Danio rerio (Zebrafish) protein is RNA transcription, translation and transport factor protein.